The sequence spans 517 residues: Sugar transport protein MST1 (517 aa).

Topologically, residues 1 to 25 (MAGGVIVANDGDGSAVDHGGRLTFS) are cytoplasmic. Residues 26–46 (VVITCLVAASGGLIFGYDVGI) form a helical membrane-spanning segment. At 47–83 (SGGVSTMEPFLRRFFPGVVRRMAEARPGNEYCVYDSQ) the chain is on the extracellular side. The helical transmembrane segment at 84-104 (ALTAFTSSLYVAGLVASLVAS) threads the bilayer. Topologically, residues 105-120 (RVTRAMGRQAVMVMGG) are cytoplasmic. A helical transmembrane segment spans residues 121–141 (ALFFAGGAVTGFAVNIAMLIV). The Extracellular segment spans residues 142-143 (GR). Residues 144–164 (MLLGFGVGFTNQAAPLFLAEM) traverse the membrane as a helical segment. Residues 165 to 170 (APTRWR) lie on the Cytoplasmic side of the membrane. The chain crosses the membrane as a helical span at residues 171 to 191 (GSLTAGFQFFLAVGVVIATVT). The Extracellular portion of the chain corresponds to 192-203 (NYFASRVPWGWR). The helical transmembrane segment at 204-224 (LSLGLAGAPAVVIFLGALFLT) threads the bilayer. The Cytoplasmic segment spans residues 225 to 288 (DTPSSLVMRG…AARREYRPYL (64 aa)). A helical membrane pass occupies residues 289–309 (VFAVAMPMFFQLTGVIVISFF). At 310-325 (SPLVFRTVGFGSNAAL) the chain is on the extracellular side. The helical transmembrane segment at 326–346 (MGNVILGAVNLVCLMLSTLVI) threads the bilayer. The Cytoplasmic portion of the chain corresponds to 347–352 (DRYGRK). A helical transmembrane segment spans residues 353–373 (VLFMVGGAIMIIAQVGVAWIM). The Extracellular portion of the chain corresponds to 374 to 389 (GAQVGKNGSEAMARPY). Residues 390 to 410 (AVAVVAFTCLHTAGFGWSWGP) traverse the membrane as a helical segment. The Cytoplasmic portion of the chain corresponds to 411–430 (LGWVIPGEIFPVDIRSAGQA). Residues 431 to 451 (MNVSIGLGLTFVQTQSFLAML) traverse the membrane as a helical segment. Residues 452 to 456 (CRFRY) are Extracellular-facing. A helical transmembrane segment spans residues 457–477 (GTFAYYAAWVAVMTVFIAVFL). Residues 478 to 517 (PETKGVPLESMATVWARHWYWKRFAREQPKTSADEPTGTY) lie on the Cytoplasmic side of the membrane.

This sequence belongs to the major facilitator superfamily. Sugar transporter (TC 2.A.1.1) family.

The protein resides in the membrane. Its function is as follows. Mediates active uptake of hexoses by sugar:proton symport. This Oryza sativa subsp. japonica (Rice) protein is Sugar transport protein MST1.